Reading from the N-terminus, the 146-residue chain is Cytochrome c oxidase subunit 5A, mitochondrial (146 aa).

Residues 1-37 (MLAAALRRCTAAAAARGLLHPASAPSPAAAVCSIRCY) constitute a mitochondrion transit peptide. The SIFI-degron signature appears at 2–16 (LAAALRRCTAAAAAR). N6-acetyllysine occurs at positions 83 and 109. Position 137 is a phosphothreonine (Thr-137).

This sequence belongs to the cytochrome c oxidase subunit 5A family. As to quaternary structure, component of the cytochrome c oxidase (complex IV, CIV), a multisubunit enzyme composed of 14 subunits. The complex is composed of a catalytic core of 3 subunits MT-CO1, MT-CO2 and MT-CO3, encoded in the mitochondrial DNA, and 11 supernumerary subunits COX4I, COX5A, COX5B, COX6A, COX6B, COX6C, COX7A, COX7B, COX7C, COX8 and NDUFA4, which are encoded in the nuclear genome. The complex exists as a monomer or a dimer and forms supercomplexes (SCs) in the inner mitochondrial membrane with NADH-ubiquinone oxidoreductase (complex I, CI) and ubiquinol-cytochrome c oxidoreductase (cytochrome b-c1 complex, complex III, CIII), resulting in different assemblies (supercomplex SCI(1)III(2)IV(1) and megacomplex MCI(2)III(2)IV(2)). Interacts with AFG1L. Interacts with RAB5IF. In terms of processing, in response to mitochondrial stress, the precursor protein is ubiquitinated by the SIFI complex in the cytoplasm before mitochondrial import, leading to its degradation. Within the SIFI complex, UBR4 initiates ubiquitin chain that are further elongated or branched by KCMF1.

The protein localises to the mitochondrion inner membrane. It participates in energy metabolism; oxidative phosphorylation. Functionally, component of the cytochrome c oxidase, the last enzyme in the mitochondrial electron transport chain which drives oxidative phosphorylation. The respiratory chain contains 3 multisubunit complexes succinate dehydrogenase (complex II, CII), ubiquinol-cytochrome c oxidoreductase (cytochrome b-c1 complex, complex III, CIII) and cytochrome c oxidase (complex IV, CIV), that cooperate to transfer electrons derived from NADH and succinate to molecular oxygen, creating an electrochemical gradient over the inner membrane that drives transmembrane transport and the ATP synthase. Cytochrome c oxidase is the component of the respiratory chain that catalyzes the reduction of oxygen to water. Electrons originating from reduced cytochrome c in the intermembrane space (IMS) are transferred via the dinuclear copper A center (CU(A)) of subunit 2 and heme A of subunit 1 to the active site in subunit 1, a binuclear center (BNC) formed by heme A3 and copper B (CU(B)). The BNC reduces molecular oxygen to 2 water molecules using 4 electrons from cytochrome c in the IMS and 4 protons from the mitochondrial matrix. This chain is Cytochrome c oxidase subunit 5A, mitochondrial (Cox5a), found in Mus musculus (Mouse).